The primary structure comprises 310 residues: p-hydroxybenzoic acid efflux pump subunit AaeA (310 aa).

A helical membrane pass occupies residues 12 to 32; that stretch reads AITLVLVILAFIAIFRAWVYY.

This sequence belongs to the membrane fusion protein (MFP) (TC 8.A.1) family.

The protein resides in the cell inner membrane. Its function is as follows. Forms an efflux pump with AaeB. This is p-hydroxybenzoic acid efflux pump subunit AaeA from Salmonella schwarzengrund (strain CVM19633).